The sequence spans 147 residues: D-aminoacyl-tRNA deacylase (147 aa).

The Gly-cisPro motif, important for rejection of L-amino acids signature appears at 137 to 138; that stretch reads GP.

Belongs to the DTD family. In terms of assembly, homodimer.

The protein localises to the cytoplasm. The enzyme catalyses glycyl-tRNA(Ala) + H2O = tRNA(Ala) + glycine + H(+). The catalysed reaction is a D-aminoacyl-tRNA + H2O = a tRNA + a D-alpha-amino acid + H(+). An aminoacyl-tRNA editing enzyme that deacylates mischarged D-aminoacyl-tRNAs. Also deacylates mischarged glycyl-tRNA(Ala), protecting cells against glycine mischarging by AlaRS. Acts via tRNA-based rather than protein-based catalysis; rejects L-amino acids rather than detecting D-amino acids in the active site. By recycling D-aminoacyl-tRNA to D-amino acids and free tRNA molecules, this enzyme counteracts the toxicity associated with the formation of D-aminoacyl-tRNA entities in vivo and helps enforce protein L-homochirality. The polypeptide is D-aminoacyl-tRNA deacylase (Bacillus velezensis (strain DSM 23117 / BGSC 10A6 / LMG 26770 / FZB42) (Bacillus amyloliquefaciens subsp. plantarum)).